The chain runs to 250 residues: Acetylglutamate kinase (250 aa).

Substrate contacts are provided by residues 41-42 (GG), arginine 63, and asparagine 156.

It belongs to the acetylglutamate kinase family. ArgB subfamily.

The protein resides in the cytoplasm. The catalysed reaction is N-acetyl-L-glutamate + ATP = N-acetyl-L-glutamyl 5-phosphate + ADP. Its pathway is amino-acid biosynthesis; L-arginine biosynthesis; N(2)-acetyl-L-ornithine from L-glutamate: step 2/4. Its function is as follows. Catalyzes the ATP-dependent phosphorylation of N-acetyl-L-glutamate. This is Acetylglutamate kinase from Listeria monocytogenes serovar 1/2a (strain ATCC BAA-679 / EGD-e).